A 574-amino-acid chain; its full sequence is 2-succinyl-5-enolpyruvyl-6-hydroxy-3-cyclohexene-1-carboxylate synthase (574 aa).

Belongs to the TPP enzyme family. MenD subfamily. As to quaternary structure, homodimer. Mg(2+) is required as a cofactor. It depends on Mn(2+) as a cofactor. Requires thiamine diphosphate as cofactor.

The catalysed reaction is isochorismate + 2-oxoglutarate + H(+) = 5-enolpyruvoyl-6-hydroxy-2-succinyl-cyclohex-3-ene-1-carboxylate + CO2. It functions in the pathway quinol/quinone metabolism; 1,4-dihydroxy-2-naphthoate biosynthesis; 1,4-dihydroxy-2-naphthoate from chorismate: step 2/7. Its pathway is cofactor biosynthesis; phylloquinone biosynthesis. In terms of biological role, catalyzes the thiamine diphosphate-dependent decarboxylation of 2-oxoglutarate and the subsequent addition of the resulting succinic semialdehyde-thiamine pyrophosphate anion to isochorismate to yield 2-succinyl-5-enolpyruvyl-6-hydroxy-3-cyclohexene-1-carboxylate (SEPHCHC). The protein is 2-succinyl-5-enolpyruvyl-6-hydroxy-3-cyclohexene-1-carboxylate synthase of Prochlorococcus marinus (strain SARG / CCMP1375 / SS120).